Consider the following 304-residue polypeptide: tRNA pseudouridine synthase B (304 aa).

Residue Asp41 is the Nucleophile of the active site.

This sequence belongs to the pseudouridine synthase TruB family. Type 1 subfamily.

The enzyme catalyses uridine(55) in tRNA = pseudouridine(55) in tRNA. In terms of biological role, responsible for synthesis of pseudouridine from uracil-55 in the psi GC loop of transfer RNAs. The polypeptide is tRNA pseudouridine synthase B (Nitratidesulfovibrio vulgaris (strain ATCC 29579 / DSM 644 / CCUG 34227 / NCIMB 8303 / VKM B-1760 / Hildenborough) (Desulfovibrio vulgaris)).